Here is a 138-residue protein sequence, read N- to C-terminus: ATP synthase epsilon chain (138 aa).

The protein belongs to the ATPase epsilon chain family. As to quaternary structure, F-type ATPases have 2 components, CF(1) - the catalytic core - and CF(0) - the membrane proton channel. CF(1) has five subunits: alpha(3), beta(3), gamma(1), delta(1), epsilon(1). CF(0) has three main subunits: a, b and c.

The protein localises to the cell inner membrane. Produces ATP from ADP in the presence of a proton gradient across the membrane. This chain is ATP synthase epsilon chain, found in Verminephrobacter eiseniae (strain EF01-2).